Consider the following 916-residue polypeptide: RNA-directed DNA polymerase from mobile element jockey (916 aa).

The 275-residue stretch at 483–757 (SILRVGYFPK…HEYKYLGVIL (275 aa)) folds into the Reverse transcriptase domain. Residues 890-916 (RSASPRSRVRRRLKRHHPQDLLDRALT) are disordered. The segment covering 896 to 906 (SRVRRRLKRHH) has biased composition (basic residues). A compositionally biased stretch (basic and acidic residues) spans 907–916 (PQDLLDRALT).

Mg(2+) serves as cofactor. The cofactor is Mn(2+).

It catalyses the reaction DNA(n) + a 2'-deoxyribonucleoside 5'-triphosphate = DNA(n+1) + diphosphate. With respect to regulation, inactivated by sulphydryl reagent. This chain is RNA-directed DNA polymerase from mobile element jockey (jockey\pol), found in Drosophila funebris (Fruit fly).